The chain runs to 255 residues: Acetylglutamate kinase (255 aa).

Residues 40-41 (GG), arginine 62, and asparagine 153 contribute to the substrate site.

Belongs to the acetylglutamate kinase family. ArgB subfamily.

It localises to the cytoplasm. The catalysed reaction is N-acetyl-L-glutamate + ATP = N-acetyl-L-glutamyl 5-phosphate + ADP. It participates in amino-acid biosynthesis; L-arginine biosynthesis; N(2)-acetyl-L-ornithine from L-glutamate: step 2/4. In terms of biological role, catalyzes the ATP-dependent phosphorylation of N-acetyl-L-glutamate. This Bacillus anthracis (strain CDC 684 / NRRL 3495) protein is Acetylglutamate kinase.